The following is a 654-amino-acid chain: MSDIDVLLQETRTFPPSEEFRAGAWVRDNALREAAAADPVGFWAKESEALDWMTPWSTALEWEPPRAKWFQGGTLNASVNCIDRHVHGPRRNKAALIWEGEPGDRRTFTYWDLYREVNLAANMLKKLGVGRGDRVAIYLPMIPEAVIAMLACARIGAIHTVVFGGFAPESLRDRINDCGCKLLITADGGSRRGQMVPLKRNADVALKECPSIENVLVVMRRRSGVGDETFAEMQEGRDHWWHRLKRQVPRYCEPEAMDAEDVLFVLYTSGTTGKPKGIVHTTGGFLTGVATTTKYTFDLKEEDVYWCTADIGWITGHSYLVYGPLANGATCVMYEGAPDWPDKDRFWQICERYGVTILYTAPTAIRAFMKWGTEYVKKHDLSQLRVLGSVGEPINPEAWMWYHEHIGDFQCPIVDTWWQTETGAIMITPLPGVTTTKPGSATVPFPGIRTALLDANANELTVGGGLLAITHPWPSMLRTIWGDDQRYVDTYFSKWPGRPDLYFPGDGAKLDEDGYLWILGRVDDVLNVSGHRIGTMEVESALVDHPSVAEAAVVGKHHDLKGQAIAAFVTLRAGFTASGSLRDELRDHVAQKIGALARPDDILFSADLPKTRSGKIMRRLLRDIAEGRALGDTTTLADPSVVASLKDQYEAQES.

Residues 191–194 (RRGQ) and T315 contribute to the CoA site. Residues 391-393 (GEP), 415-420 (DTWWQT), D506, and R521 contribute to the ATP site. CoA is bound at residue S529. R532 lines the ATP pocket. Mg(2+)-binding residues include V543, H545, and V548. K615 bears the N6-acetyllysine mark.

Belongs to the ATP-dependent AMP-binding enzyme family. Mg(2+) is required as a cofactor. In terms of processing, acetylated. Deacetylation by the SIR2-homolog deacetylase activates the enzyme.

It catalyses the reaction acetate + ATP + CoA = acetyl-CoA + AMP + diphosphate. Its function is as follows. Catalyzes the conversion of acetate into acetyl-CoA (AcCoA), an essential intermediate at the junction of anabolic and catabolic pathways. AcsA undergoes a two-step reaction. In the first half reaction, AcsA combines acetate with ATP to form acetyl-adenylate (AcAMP) intermediate. In the second half reaction, it can then transfer the acetyl group from AcAMP to the sulfhydryl group of CoA, forming the product AcCoA. In Gemmatimonas aurantiaca (strain DSM 14586 / JCM 11422 / NBRC 100505 / T-27), this protein is Acetyl-coenzyme A synthetase.